Here is a 660-residue protein sequence, read N- to C-terminus: Methionine--tRNA ligase (660 aa).

Residues 15–25 carry the 'HIGH' region motif; that stretch reads YYPSDKLHIGH. Residues 311 to 315 carry the 'KMSKS' region motif; it reads KMSKS. K314 lines the ATP pocket. Residues 535-554 are disordered; it reads LMGGSKKPEEAPKDEKEESD. Residues 540-550 are compositionally biased toward basic and acidic residues; the sequence is KKPEEAPKDEK. The tRNA-binding domain maps to 560 to 660; sequence DFSKVELRIA…GALPNGSLVK (101 aa).

Belongs to the class-I aminoacyl-tRNA synthetase family. MetG type 2B subfamily. Homodimer.

Its subcellular location is the cytoplasm. It carries out the reaction tRNA(Met) + L-methionine + ATP = L-methionyl-tRNA(Met) + AMP + diphosphate. Is required not only for elongation of protein synthesis but also for the initiation of all mRNA translation through initiator tRNA(fMet) aminoacylation. This is Methionine--tRNA ligase (metG) from Halalkalibacterium halodurans (strain ATCC BAA-125 / DSM 18197 / FERM 7344 / JCM 9153 / C-125) (Bacillus halodurans).